A 159-amino-acid polypeptide reads, in one-letter code: Protein NrdI (159 aa).

Belongs to the NrdI family.

Probably involved in ribonucleotide reductase function. The polypeptide is Protein NrdI (Rhodococcus erythropolis (strain PR4 / NBRC 100887)).